A 424-amino-acid polypeptide reads, in one-letter code: GTPase Obg (424 aa).

The Obg domain maps to 1 to 158 (MFIDTAKIFV…RWIKLELKLL (158 aa)). An OBG-type G domain is found at 159–331 (ADVGLIGFPN…LMKEAARLLS (173 aa)). Residues 165-172 (GFPNVGKS), 190-194 (FTTLK), 212-215 (DIPG), 282-285 (NKSD), and 312-314 (SAA) contribute to the GTP site. 2 residues coordinate Mg(2+): S172 and T192. The region spanning 345–424 (RFIEEEKRFT…LNDFEFDFLL (80 aa)) is the OCT domain.

This sequence belongs to the TRAFAC class OBG-HflX-like GTPase superfamily. OBG GTPase family. As to quaternary structure, monomer. Requires Mg(2+) as cofactor.

It localises to the cytoplasm. Functionally, an essential GTPase which binds GTP, GDP and possibly (p)ppGpp with moderate affinity, with high nucleotide exchange rates and a fairly low GTP hydrolysis rate. Plays a role in control of the cell cycle, stress response, ribosome biogenesis and in those bacteria that undergo differentiation, in morphogenesis control. The chain is GTPase Obg from Clostridium botulinum (strain ATCC 19397 / Type A).